A 115-amino-acid chain; its full sequence is Aspartate 1-decarboxylase (115 aa).

The active-site Schiff-base intermediate with substrate; via pyruvic acid is the Ser-25. Ser-25 carries the post-translational modification Pyruvic acid (Ser). Thr-57 contributes to the substrate binding site. The Proton donor role is filled by Tyr-58. A substrate-binding site is contributed by 72–74; sequence GAA.

The protein belongs to the PanD family. Heterooctamer of four alpha and four beta subunits. Pyruvate is required as a cofactor. Post-translationally, is synthesized initially as an inactive proenzyme, which is activated by self-cleavage at a specific serine bond to produce a beta-subunit with a hydroxyl group at its C-terminus and an alpha-subunit with a pyruvoyl group at its N-terminus.

It localises to the cytoplasm. It catalyses the reaction L-aspartate + H(+) = beta-alanine + CO2. The protein operates within cofactor biosynthesis; (R)-pantothenate biosynthesis; beta-alanine from L-aspartate: step 1/1. Its function is as follows. Catalyzes the pyruvoyl-dependent decarboxylation of aspartate to produce beta-alanine. In Campylobacter fetus subsp. fetus (strain 82-40), this protein is Aspartate 1-decarboxylase.